A 338-amino-acid polypeptide reads, in one-letter code: Fructose-1,6-bisphosphatase class 1 1 (338 aa).

Mg(2+) is bound by residues Glu-88, Asp-107, Leu-109, and Asp-110. Residues Asp-110–Ser-113 and Asn-196 each bind substrate. Glu-268 is a Mg(2+) binding site.

This sequence belongs to the FBPase class 1 family. As to quaternary structure, homotetramer. Mg(2+) is required as a cofactor.

The protein resides in the cytoplasm. It catalyses the reaction beta-D-fructose 1,6-bisphosphate + H2O = beta-D-fructose 6-phosphate + phosphate. It functions in the pathway carbohydrate biosynthesis; Calvin cycle. The sequence is that of Fructose-1,6-bisphosphatase class 1 1 from Bradyrhizobium sp. (strain BTAi1 / ATCC BAA-1182).